The chain runs to 166 residues: Ribosome maturation factor RimM (166 aa).

Residues 91-163 (EDEFYEFQLI…KMQITPPEGW (73 aa)) form the PRC barrel domain.

This sequence belongs to the RimM family. As to quaternary structure, binds ribosomal protein uS19.

It localises to the cytoplasm. In terms of biological role, an accessory protein needed during the final step in the assembly of 30S ribosomal subunit, possibly for assembly of the head region. Essential for efficient processing of 16S rRNA. May be needed both before and after RbfA during the maturation of 16S rRNA. It has affinity for free ribosomal 30S subunits but not for 70S ribosomes. The polypeptide is Ribosome maturation factor RimM (Sulfurihydrogenibium sp. (strain YO3AOP1)).